Consider the following 330-residue polypeptide: CRISPR-associated endonuclease Cas1 (330 aa).

Positions 154, 222, and 237 each coordinate Mn(2+).

The protein belongs to the CRISPR-associated endonuclease Cas1 family. In terms of assembly, homodimer, forms a heterotetramer with a Cas2 homodimer. Mg(2+) serves as cofactor. It depends on Mn(2+) as a cofactor.

CRISPR (clustered regularly interspaced short palindromic repeat), is an adaptive immune system that provides protection against mobile genetic elements (viruses, transposable elements and conjugative plasmids). CRISPR clusters contain spacers, sequences complementary to antecedent mobile elements, and target invading nucleic acids. CRISPR clusters are transcribed and processed into CRISPR RNA (crRNA). Acts as a dsDNA endonuclease. Involved in the integration of spacer DNA into the CRISPR cassette. This chain is CRISPR-associated endonuclease Cas1, found in Clostridium perfringens (strain SM101 / Type A).